The following is a 325-amino-acid chain: Biotin synthase (325 aa).

The 230-residue stretch at 52–281 (YQKDDVVLCS…AKPLLICGGR (230 aa)) folds into the Radical SAM core domain. Residues cysteine 70, cysteine 74, and cysteine 77 each contribute to the [4Fe-4S] cluster site. The [2Fe-2S] cluster site is built by serine 114, cysteine 146, and cysteine 206.

Belongs to the radical SAM superfamily. Biotin synthase family. As to quaternary structure, homodimer. [4Fe-4S] cluster serves as cofactor. [2Fe-2S] cluster is required as a cofactor.

It catalyses the reaction (4R,5S)-dethiobiotin + (sulfur carrier)-SH + 2 reduced [2Fe-2S]-[ferredoxin] + 2 S-adenosyl-L-methionine = (sulfur carrier)-H + biotin + 2 5'-deoxyadenosine + 2 L-methionine + 2 oxidized [2Fe-2S]-[ferredoxin]. It participates in cofactor biosynthesis; biotin biosynthesis; biotin from 7,8-diaminononanoate: step 2/2. Functionally, catalyzes the conversion of dethiobiotin (DTB) to biotin by the insertion of a sulfur atom into dethiobiotin via a radical-based mechanism. In Syntrophus aciditrophicus (strain SB), this protein is Biotin synthase.